The following is a 189-amino-acid chain: MENNKCGTMRGESVYLAYPFILGSVIFVEFFIFGLVYLTFGLGLKTIIITSGVILICLLPISIILIRLFIKSIAGKNKGKLIKKYTKLKILNKKYKILKVLLFIVGINFYLFGNLVSLNINPYTKFVLYSISAFFIIISIVVGDVIVEFYENGVFINPLGFYKWGEVGKEDLNDRLILKIDKLVIECKR.

The next 4 membrane-spanning stretches (helical) occupy residues 20–40, 46–66, 100–120, and 126–146; these read FILG…YLTF, TIII…IILI, VLLF…SLNI, and FVLY…GDVI.

This sequence to M.jannaschii MJ0795.1 and MJ1249.1.

It localises to the cell membrane. This is an uncharacterized protein from Methanocaldococcus jannaschii (strain ATCC 43067 / DSM 2661 / JAL-1 / JCM 10045 / NBRC 100440) (Methanococcus jannaschii).